Consider the following 379-residue polypeptide: Protein COS2 (379 aa).

Residues 1 to 72 (MKENELKNEK…WKLSNNCIYP (72 aa)) lie on the Cytoplasmic side of the membrane. A helical transmembrane segment spans residues 73–93 (LIVSLLVLFLGPIFVLVICGL). Topologically, residues 94-254 (SRKRSLSKQL…FLCCIYVSRG (161 aa)) are extracellular. Residues 255 to 275 (MCLLLRTLYLGWILFMLVQGF) form a helical membrane-spanning segment. The Cytoplasmic segment spans residues 276–379 (QNIRVLIMSM…QLSRSEVLLV (104 aa)).

Belongs to the DUP/COS family.

It localises to the membrane. This is Protein COS2 (COS2) from Saccharomyces cerevisiae (strain ATCC 204508 / S288c) (Baker's yeast).